We begin with the raw amino-acid sequence, 188 residues long: Large ribosomal subunit protein eL18 (188 aa).

The segment at 143–188 (RSAREAEKHFGPAPGVPHSHTKPHVRSKGRKFERARGRRASRAYKN) is disordered. Composition is skewed to basic residues over residues 161-171 (SHTKPHVRSKG) and 178-188 (RGRRASRAYKN).

The protein belongs to the eukaryotic ribosomal protein eL18 family.

It localises to the cytoplasm. This is Large ribosomal subunit protein eL18 (rpl-18) from Caenorhabditis briggsae.